A 1592-amino-acid chain; its full sequence is Autophagy-related protein 2 (1592 aa).

S236 carries the phosphoserine modification. The segment at 264–286 is disordered; it reads AMEEQSNEDPSEPQVTQEEQEND.

Belongs to the ATG2 family.

The protein localises to the preautophagosomal structure membrane. Its subcellular location is the endoplasmic reticulum membrane. It carries out the reaction a 1,2-diacyl-sn-glycero-3-phosphocholine(in) = a 1,2-diacyl-sn-glycero-3-phosphocholine(out). The catalysed reaction is a 1,2-diacyl-sn-glycero-3-phospho-L-serine(in) = a 1,2-diacyl-sn-glycero-3-phospho-L-serine(out). The enzyme catalyses a 1,2-diacyl-sn-glycero-3-phosphoethanolamine(in) = a 1,2-diacyl-sn-glycero-3-phosphoethanolamine(out). Lipid transfer protein required for autophagosome completion and peroxisome degradation. Tethers the edge of the isolation membrane (IM) to the endoplasmic reticulum (ER) and mediates direct lipid transfer from ER to IM for IM expansion. ATG2 binds to the ER exit site (ERES), which is the membrane source for autophagosome formation, using basic residues in its N-terminal region (NR) and to the expanding edge of the IM through its C-terminal region. The latter binding is assisted by an ATG18-PtdIns3P interaction. ATG2 then extracts phospholipids from the membrane source using its NR and transfers them to ATG9 to the IM through its predicted beta-sheet-rich structure for membrane expansion. This chain is Autophagy-related protein 2 (ATG2), found in Saccharomyces cerevisiae (strain YJM789) (Baker's yeast).